The primary structure comprises 268 residues: Xyloglucan endotransglucosylase protein 7 (268 aa).

One can recognise a GH16 domain in the interval 1–196 (MNAEGGNLHR…WTKAPFTASY (196 aa)). The active-site Nucleophile is the Glu82. Glu86 serves as the catalytic Proton donor. Residue Glu86 participates in xyloglucan binding. Asn90 carries an N-linked (GlcNAc...) asparagine glycan. Xyloglucan contacts are provided by residues 99–101 (HTN), 109–111 (NRE), 175–176 (DW), and Gly180. 2 disulfide bridges follow: Cys204/Cys213 and Cys251/Cys265. Arg256 lines the xyloglucan pocket.

Belongs to the glycosyl hydrolase 16 family. XTH group 2 subfamily. In terms of processing, contains at least one intrachain disulfide bond essential for its enzymatic activity. As to expression, expressed at a very high level in flowers and stems (picked at anthesis), and at a lower level in ripe leaves and fruits.

It localises to the cytoplasm. It carries out the reaction breaks a beta-(1-&gt;4) bond in the backbone of a xyloglucan and transfers the xyloglucanyl segment on to O-4 of the non-reducing terminal glucose residue of an acceptor, which can be a xyloglucan or an oligosaccharide of xyloglucan.. Functionally, catalyzes xyloglucan endotransglycosylation (XET). Cleaves and religates xyloglucan polymers. Does not catalyze xyloglucan endohydrolysis (XEH). Probably involved in cell wall assembly and synthesis in fast growing tissues and in the maintenance of firmness in mature fruits. The protein is Xyloglucan endotransglucosylase protein 7 of Diospyros kaki (Kaki persimmon).